The chain runs to 703 residues: Meiotic coiled-coil protein 2 (703 aa).

Composition is skewed to polar residues over residues 1–19 and 245–258; these read MQSIDLRLPSTSANHSISE and TNVRYSNSKPSTPL. 3 disordered regions span residues 1-29, 245-265, and 284-309; these read MQSIDLRLPSTSANHSISESLEHSKSELN, TNVRYSNSKPSTPLSPEDVDL, and ASTNNLSTNTSGTLKPYSLSSSRSSS. Positions 331-686 constitute a PUM-HD domain; that stretch reads NPSVIPESTS…KVAYLVEKWN (356 aa). 8 Pumilio repeats span residues 361-396, 397-432, 433-468, 469-504, 509-544, 545-580, 581-616, and 625-660; these read NVIIDKIIVSNDQQSSIFLQQKLKISSYDMKQNIVD, SIISQIHPLMLNRFGNFLVQRCFEHGTAPQIRQMGS, AMLGNMLKLATDPFGCHVVQKAIDNVTEDIKLAMMD, ELFLTIDVTIMHHYACHVWQKLFETQWYEYPVNVMN, ALRGKWHEVAVGENGSLVVQNMFENCVEKDKRECIE, EIIFHLDGIARGQWGNWVVQHMVENGQGEDLKRVID, ALLNRAVEFSIDQFASKVIEKAIKSGPKNFISLYLK, and RTRQPLIDIASDQYGNYLIQQIIQLGQPAEKNLVIT.

The chain is Meiotic coiled-coil protein 2 (mcp2) from Schizosaccharomyces pombe (strain 972 / ATCC 24843) (Fission yeast).